A 235-amino-acid chain; its full sequence is Glycerol-3-phosphate acyltransferase (235 aa).

6 helical membrane passes run 4–24 (LLAI…IMAG), 56–76 (TVTL…VAFF), 94–114 (LLAG…GFKG), 124–144 (MLIG…LLTI), 152–172 (VASM…KYIF), and 191–211 (FHDS…LGIL).

Belongs to the PlsY family. In terms of assembly, probably interacts with PlsX.

The protein resides in the cell inner membrane. It carries out the reaction an acyl phosphate + sn-glycerol 3-phosphate = a 1-acyl-sn-glycero-3-phosphate + phosphate. It participates in lipid metabolism; phospholipid metabolism. Its function is as follows. Catalyzes the transfer of an acyl group from acyl-phosphate (acyl-PO(4)) to glycerol-3-phosphate (G3P) to form lysophosphatidic acid (LPA). This enzyme utilizes acyl-phosphate as fatty acyl donor, but not acyl-CoA or acyl-ACP. The chain is Glycerol-3-phosphate acyltransferase from Chlorobium limicola (strain DSM 245 / NBRC 103803 / 6330).